The primary structure comprises 253 residues: tRNA (guanine-N(1)-)-methyltransferase (253 aa).

Residues Gly113 and 133-138 (IGDYVL) contribute to the S-adenosyl-L-methionine site.

It belongs to the RNA methyltransferase TrmD family. Homodimer.

It localises to the cytoplasm. It carries out the reaction guanosine(37) in tRNA + S-adenosyl-L-methionine = N(1)-methylguanosine(37) in tRNA + S-adenosyl-L-homocysteine + H(+). Functionally, specifically methylates guanosine-37 in various tRNAs. The sequence is that of tRNA (guanine-N(1)-)-methyltransferase from Chloroflexus aurantiacus (strain ATCC 29366 / DSM 635 / J-10-fl).